The sequence spans 467 residues: Hydroxymethylglutaryl-CoA synthase erg13A (467 aa).

Ala-35 is a binding site for (3S)-3-hydroxy-3-methylglutaryl-CoA. The active-site Proton donor/acceptor is the Glu-86. 7 residues coordinate (3S)-3-hydroxy-3-methylglutaryl-CoA: Cys-118, Thr-160, Ser-209, His-259, Lys-268, Asn-334, and Ser-368. The Acyl-thioester intermediate role is filled by Cys-118. His-259 serves as the catalytic Proton donor/acceptor.

This sequence belongs to the thiolase-like superfamily. HMG-CoA synthase family.

It catalyses the reaction acetoacetyl-CoA + acetyl-CoA + H2O = (3S)-3-hydroxy-3-methylglutaryl-CoA + CoA + H(+). Its pathway is metabolic intermediate biosynthesis; (R)-mevalonate biosynthesis; (R)-mevalonate from acetyl-CoA: step 2/3. Hydroxymethylglutaryl-CoA synthase; part of the first module of ergosterol biosynthesis pathway that includes the early steps of the pathway, conserved across all eukaryotes, and which results in the formation of mevalonate from acetyl-coenzyme A (acetyl-CoA). Erg13A and erg13B condense acetyl-CoA with acetoacetyl-CoA to form hydroxymethylglutaryl-CoA (HMG-CoA). The first module starts with the action of the cytosolic acetyl-CoA acetyltransferase erg10B that catalyzes the formation of acetoacetyl-CoA. The hydroxymethylglutaryl-CoA synthases erg13A and erg13B then condense acetyl-CoA with acetoacetyl-CoA to form HMG-CoA. The rate-limiting step of the early module is the reduction to mevalonate by the 3-hydroxy-3-methylglutaryl-coenzyme A (HMG-CoA) reductases hmg1 and hmg2. Mevalonate is also a precursor for the extracellular siderophore triacetylfusarinine C (TAFC). In Aspergillus fumigatus (strain ATCC MYA-4609 / CBS 101355 / FGSC A1100 / Af293) (Neosartorya fumigata), this protein is Hydroxymethylglutaryl-CoA synthase erg13A.